The following is a 401-amino-acid chain: tRNA pseudouridine synthase Pus10 (401 aa).

The 132-residue stretch at 64-195 (ALAKSGHRES…DGSVSVEVMP (132 aa)) folds into the THUMP domain.

It belongs to the pseudouridine synthase Pus10 family.

It catalyses the reaction uridine(54) in tRNA = pseudouridine(54) in tRNA. The catalysed reaction is uridine(55) in tRNA = pseudouridine(55) in tRNA. In terms of biological role, responsible for synthesis of pseudouridine from uracil-54 and uracil-55 in the psi GC loop of transfer RNAs. This Caldivirga maquilingensis (strain ATCC 700844 / DSM 13496 / JCM 10307 / IC-167) protein is tRNA pseudouridine synthase Pus10.